Consider the following 641-residue polypeptide: Chaperone protein HtpG (641 aa).

The a; substrate-binding stretch occupies residues 1–351; it reads MTQSVHAETH…SNDLPLNVSR (351 aa). The tract at residues 352–568 is b; the sequence is EILQDNKVTV…AHGMSTQMIK (217 aa). Residues 569–641 form a c region; sequence LMRAAGQPVP…SRINRLLLQA (73 aa).

The protein belongs to the heat shock protein 90 family. In terms of assembly, homodimer.

The protein resides in the cytoplasm. In terms of biological role, molecular chaperone. Has ATPase activity. This Aeromonas hydrophila subsp. hydrophila (strain ATCC 7966 / DSM 30187 / BCRC 13018 / CCUG 14551 / JCM 1027 / KCTC 2358 / NCIMB 9240 / NCTC 8049) protein is Chaperone protein HtpG.